The following is a 185-amino-acid chain: Elongation factor P (185 aa).

Belongs to the elongation factor P family.

It localises to the cytoplasm. The protein operates within protein biosynthesis; polypeptide chain elongation. In terms of biological role, involved in peptide bond synthesis. Stimulates efficient translation and peptide-bond synthesis on native or reconstituted 70S ribosomes in vitro. Probably functions indirectly by altering the affinity of the ribosome for aminoacyl-tRNA, thus increasing their reactivity as acceptors for peptidyl transferase. The sequence is that of Elongation factor P from Staphylococcus epidermidis (strain ATCC 35984 / DSM 28319 / BCRC 17069 / CCUG 31568 / BM 3577 / RP62A).